An 848-amino-acid polypeptide reads, in one-letter code: Nuclear cap-binding protein subunit 1 (848 aa).

Positions 8-228 (LLRIGEKGPE…DLLDRIQSLA (221 aa)) constitute an MIF4G domain. Positions 767-786 (EDDKPSAMDVDSENGNPKKS) are disordered.

It belongs to the NCBP1 family. As to quaternary structure, component of the nuclear cap-binding complex (CBC), a heterodimer composed of ABH1/CBP80 and CBP20 that interacts with m7GpppG-capped RNA. Expressed in all tissues analyzed, including roots, stems, leaves and flowers.

Its subcellular location is the nucleus. It is found in the cytoplasm. Functionally, component of the cap-binding complex (CBC), which binds cotranscriptionally to the 5'-cap of pre-mRNAs and is involved in various processes such as pre-mRNA splicing and RNA-mediated gene silencing (RNAi) by microRNAs (miRNAs). The CBC complex is involved in miRNA-mediated RNA interference and is required for primary miRNA processing. In the CBC complex, ABH1/CBP80 does not bind directly capped RNAs (m7GpppG-capped RNA) but is required to stabilize the movement of the N-terminal loop of CBP20 and lock the CBC into a high affinity cap-binding state with the cap structure. Involved in flowering regulation, possibly by regulating pre-mRNA splicing of FLC gene. Acts as a negative regulator of abscisic acid signaling in guard cells. The chain is Nuclear cap-binding protein subunit 1 (ABH1) from Arabidopsis thaliana (Mouse-ear cress).